Reading from the N-terminus, the 78-residue chain is D-alanyl carrier protein (78 aa).

In terms of domain architecture, Carrier spans 1–78 (MDVENTVVEI…KIIAKAKELQ (78 aa)). S36 carries the O-(pantetheine 4'-phosphoryl)serine modification.

This sequence belongs to the DltC family. 4'-phosphopantetheine is transferred from CoA to a specific serine of apo-DCP.

It is found in the cytoplasm. It functions in the pathway cell wall biogenesis; lipoteichoic acid biosynthesis. In terms of biological role, carrier protein involved in the D-alanylation of lipoteichoic acid (LTA). The loading of thioester-linked D-alanine onto DltC is catalyzed by D-alanine--D-alanyl carrier protein ligase DltA. The DltC-carried D-alanyl group is further transferred to cell membrane phosphatidylglycerol (PG) by forming an ester bond, probably catalyzed by DltD. D-alanylation of LTA plays an important role in modulating the properties of the cell wall in Gram-positive bacteria, influencing the net charge of the cell wall. This is D-alanyl carrier protein from Latilactobacillus sakei subsp. sakei (strain 23K) (Lactobacillus sakei subsp. sakei).